The sequence spans 236 residues: MTAKSKTSTSEGAPGAVWFRPEKQSRTKPLLTQDKIVSAAVELLDRDGVRQLSMRKLADRLQAHATSLYWHVSTKDDVLDLALDAVFGEVRLPVESGPSWRDDIIAFMAELRRVLLDHPWAAALASTRPLAGPNALARSEFVYAALAAAGFGRADVLAAGAAVSNYVIGSVSAESVWRHQDEAGTRSALAEHLRAREADYPALAGNFPADGGDWQAHFDRGAQYLVAGMAATAGLE.

The HTH tetR-type domain occupies 30 to 90; the sequence is LLTQDKIVSA…LALDAVFGEV (61 aa). Residues 53 to 72 constitute a DNA-binding region (H-T-H motif); it reads SMRKLADRLQAHATSLYWHV.

Its function is as follows. Transcriptional regulator that inhibits erythromycin production. Directly represses the expression of SACE_5813, eryAI (encoding polyketide synthase I) and ermE (encoding rRNA methyltransferase), suggesting its direct regulation of the erythromycin biosynthesis gene cluster. May play an important role in regulating secondary metabolism in actinomycetes. The protein is HTH-type transcriptional regulator SACE_5812 of Saccharopolyspora erythraea (strain ATCC 11635 / DSM 40517 / JCM 4748 / NBRC 13426 / NCIMB 8594 / NRRL 2338).